The primary structure comprises 227 residues: Cytochrome c oxidase subunit 2 (227 aa).

Residues 1–14 lie on the Mitochondrial intermembrane side of the membrane; the sequence is MTHPLQLGFQDATS. The helical transmembrane segment at 15 to 45 threads the bilayer; the sequence is PIMEELLHFHDHTLMIVFLISSLVLYIITLM. The Mitochondrial matrix portion of the chain corresponds to 46 to 59; sequence LTTKLTHTSTMDAQ. Residues 60–87 traverse the membrane as a helical segment; it reads EVETVWTILPAIILILIALPSLRILYMM. The Mitochondrial intermembrane segment spans residues 88–227; it reads DEINNPLLTV…YFEDWSVSMT (140 aa). Residues His161, Cys196, Glu198, Cys200, His204, and Met207 each contribute to the Cu cation site. Glu198 is a binding site for Mg(2+). Tyr218 carries the post-translational modification Phosphotyrosine.

This sequence belongs to the cytochrome c oxidase subunit 2 family. Component of the cytochrome c oxidase (complex IV, CIV), a multisubunit enzyme composed of 14 subunits. The complex is composed of a catalytic core of 3 subunits MT-CO1, MT-CO2 and MT-CO3, encoded in the mitochondrial DNA, and 11 supernumerary subunits COX4I, COX5A, COX5B, COX6A, COX6B, COX6C, COX7A, COX7B, COX7C, COX8 and NDUFA4, which are encoded in the nuclear genome. The complex exists as a monomer or a dimer and forms supercomplexes (SCs) in the inner mitochondrial membrane with NADH-ubiquinone oxidoreductase (complex I, CI) and ubiquinol-cytochrome c oxidoreductase (cytochrome b-c1 complex, complex III, CIII), resulting in different assemblies (supercomplex SCI(1)III(2)IV(1) and megacomplex MCI(2)III(2)IV(2)). Found in a complex with TMEM177, COA6, COX18, COX20, SCO1 and SCO2. Interacts with TMEM177 in a COX20-dependent manner. Interacts with COX20. Interacts with COX16. Cu cation serves as cofactor.

It is found in the mitochondrion inner membrane. It catalyses the reaction 4 Fe(II)-[cytochrome c] + O2 + 8 H(+)(in) = 4 Fe(III)-[cytochrome c] + 2 H2O + 4 H(+)(out). Its function is as follows. Component of the cytochrome c oxidase, the last enzyme in the mitochondrial electron transport chain which drives oxidative phosphorylation. The respiratory chain contains 3 multisubunit complexes succinate dehydrogenase (complex II, CII), ubiquinol-cytochrome c oxidoreductase (cytochrome b-c1 complex, complex III, CIII) and cytochrome c oxidase (complex IV, CIV), that cooperate to transfer electrons derived from NADH and succinate to molecular oxygen, creating an electrochemical gradient over the inner membrane that drives transmembrane transport and the ATP synthase. Cytochrome c oxidase is the component of the respiratory chain that catalyzes the reduction of oxygen to water. Electrons originating from reduced cytochrome c in the intermembrane space (IMS) are transferred via the dinuclear copper A center (CU(A)) of subunit 2 and heme A of subunit 1 to the active site in subunit 1, a binuclear center (BNC) formed by heme A3 and copper B (CU(B)). The BNC reduces molecular oxygen to 2 water molecules using 4 electrons from cytochrome c in the IMS and 4 protons from the mitochondrial matrix. In Carlito syrichta (Philippine tarsier), this protein is Cytochrome c oxidase subunit 2 (MT-CO2).